A 447-amino-acid polypeptide reads, in one-letter code: tRNA-2-methylthio-N(6)-dimethylallyladenosine synthase (447 aa).

Positions 10–128 (KLFCISTYGC…FPEYLHRVLQ (119 aa)) constitute an MTTase N-terminal domain. [4Fe-4S] cluster-binding residues include cysteine 19, cysteine 55, cysteine 89, cysteine 165, cysteine 169, and cysteine 172. The Radical SAM core domain maps to 151 to 382 (RKSDVKAFVT…EAINKKVVIK (232 aa)). The TRAM domain occupies 384–447 (KEYEGKVVEV…PFSLIGEIVE (64 aa)).

This sequence belongs to the methylthiotransferase family. MiaB subfamily. As to quaternary structure, monomer. Requires [4Fe-4S] cluster as cofactor.

The protein localises to the cytoplasm. It carries out the reaction N(6)-dimethylallyladenosine(37) in tRNA + (sulfur carrier)-SH + AH2 + 2 S-adenosyl-L-methionine = 2-methylsulfanyl-N(6)-dimethylallyladenosine(37) in tRNA + (sulfur carrier)-H + 5'-deoxyadenosine + L-methionine + A + S-adenosyl-L-homocysteine + 2 H(+). Its function is as follows. Catalyzes the methylthiolation of N6-(dimethylallyl)adenosine (i(6)A), leading to the formation of 2-methylthio-N6-(dimethylallyl)adenosine (ms(2)i(6)A) at position 37 in tRNAs that read codons beginning with uridine. The polypeptide is tRNA-2-methylthio-N(6)-dimethylallyladenosine synthase (Clostridium perfringens (strain ATCC 13124 / DSM 756 / JCM 1290 / NCIMB 6125 / NCTC 8237 / Type A)).